Reading from the N-terminus, the 839-residue chain is Taste receptor type 1 member 2 (839 aa).

Positions M1–A19 are cleaved as a signal peptide. Residues E20–T566 lie on the Extracellular side of the membrane. Residues N84, N248, N292, N312, N368, N407, N428, N487, and N527 are each glycosylated (N-linked (GlcNAc...) asparagine). Residues I567–F587 form a helical membrane-spanning segment. Topologically, residues W588–P602 are cytoplasmic. A helical transmembrane segment spans residues M603–G623. Residues P624–A635 lie on the Extracellular side of the membrane. A helical membrane pass occupies residues L636–V656. Topologically, residues C657–S681 are cytoplasmic. A helical transmembrane segment spans residues M682–L702. The Extracellular portion of the chain corresponds to S703 to S727. Residues L728–M748 form a helical membrane-spanning segment. Topologically, residues G749–K760 are cytoplasmic. Residues F761–S781 traverse the membrane as a helical segment. Residues A782–S784 are Extracellular-facing. The chain crosses the membrane as a helical span at residues G785–L805. Residues G806–D839 lie on the Cytoplasmic side of the membrane.

This sequence belongs to the G-protein coupled receptor 3 family. TAS1R subfamily. Forms heterodimers with TAS1R3.

It is found in the cell membrane. In terms of biological role, putative taste receptor. TAS1R2/TAS1R3 recognizes diverse natural and synthetic sweeteners. This Gorilla gorilla gorilla (Western lowland gorilla) protein is Taste receptor type 1 member 2 (TAS1R2).